We begin with the raw amino-acid sequence, 311 residues long: Aspartate carbamoyltransferase catalytic subunit (311 aa).

Carbamoyl phosphate is bound by residues R55 and T56. K83 is an L-aspartate binding site. The carbamoyl phosphate site is built by R105, H133, and Q136. L-aspartate contacts are provided by R166 and R220. Residues G261 and P262 each coordinate carbamoyl phosphate.

Belongs to the aspartate/ornithine carbamoyltransferase superfamily. ATCase family. As to quaternary structure, heterododecamer (2C3:3R2) of six catalytic PyrB chains organized as two trimers (C3), and six regulatory PyrI chains organized as three dimers (R2).

It carries out the reaction carbamoyl phosphate + L-aspartate = N-carbamoyl-L-aspartate + phosphate + H(+). Its pathway is pyrimidine metabolism; UMP biosynthesis via de novo pathway; (S)-dihydroorotate from bicarbonate: step 2/3. Functionally, catalyzes the condensation of carbamoyl phosphate and aspartate to form carbamoyl aspartate and inorganic phosphate, the committed step in the de novo pyrimidine nucleotide biosynthesis pathway. The sequence is that of Aspartate carbamoyltransferase catalytic subunit from Chlorobium chlorochromatii (strain CaD3).